Reading from the N-terminus, the 296-residue chain is uncharacterized protein (296 aa).

The first 20 residues, 1–20, serve as a signal peptide directing secretion; the sequence is MKKALGILAILLILVGGYFA.

This is an uncharacterized protein from Aquifex aeolicus (strain VF5).